The chain runs to 195 residues: MGYIPYVIENTDRGERSYDIYSRLLKDRIVLLSGEINDSVASSIVAQLLFLEAEDPEKDIGLYINSPGGVITSGLSIYDTMNFIRPDVSTICIGQAASMGAFLLSCGAKGKRFSLPHSRIMIHQPLGGAQGQASDIEIISNEILRLKGLMNSILAQNSGQSLEQIAKDTDRDFYMSAKEAKEYGLIDKVLEKNVK.

The Nucleophile role is filled by S98. H123 is an active-site residue.

Belongs to the peptidase S14 family. In terms of assembly, fourteen ClpP subunits assemble into 2 heptameric rings which stack back to back to give a disk-like structure with a central cavity, resembling the structure of eukaryotic proteasomes.

The protein resides in the cytoplasm. It carries out the reaction Hydrolysis of proteins to small peptides in the presence of ATP and magnesium. alpha-casein is the usual test substrate. In the absence of ATP, only oligopeptides shorter than five residues are hydrolyzed (such as succinyl-Leu-Tyr-|-NHMec, and Leu-Tyr-Leu-|-Tyr-Trp, in which cleavage of the -Tyr-|-Leu- and -Tyr-|-Trp bonds also occurs).. Its function is as follows. Cleaves peptides in various proteins in a process that requires ATP hydrolysis. Has a chymotrypsin-like activity. Plays a major role in the degradation of misfolded proteins. This Helicobacter pylori (strain Shi470) protein is ATP-dependent Clp protease proteolytic subunit.